The primary structure comprises 120 residues: NAD(P)H-quinone oxidoreductase subunit 3, chloroplastic (120 aa).

3 helical membrane-spanning segments follow: residues 9–29 (IFWT…WISG), 64–84 (MFAL…PWAM), and 88–108 (VLGV…VVGL).

It belongs to the complex I subunit 3 family. As to quaternary structure, NDH is composed of at least 16 different subunits, 5 of which are encoded in the nucleus.

Its subcellular location is the plastid. It is found in the chloroplast thylakoid membrane. The enzyme catalyses a plastoquinone + NADH + (n+1) H(+)(in) = a plastoquinol + NAD(+) + n H(+)(out). It carries out the reaction a plastoquinone + NADPH + (n+1) H(+)(in) = a plastoquinol + NADP(+) + n H(+)(out). In terms of biological role, NDH shuttles electrons from NAD(P)H:plastoquinone, via FMN and iron-sulfur (Fe-S) centers, to quinones in the photosynthetic chain and possibly in a chloroplast respiratory chain. The immediate electron acceptor for the enzyme in this species is believed to be plastoquinone. Couples the redox reaction to proton translocation, and thus conserves the redox energy in a proton gradient. This is NAD(P)H-quinone oxidoreductase subunit 3, chloroplastic from Zea mays (Maize).